The primary structure comprises 1515 residues: Glutamate synthase [NADPH] large chain (1515 aa).

A propeptide spanning residues 1 to 36 (MTTELNQGEQFVADFRANAAALTTANAYNPEDEHDA) is cleaved from the precursor. Catalysis depends on Cys37, which acts as the For GATase activity. In terms of domain architecture, Glutamine amidotransferase type-2 spans 37-432 (CGVGFIAAID…PGEMIAVDLQ (396 aa)). The tract at residues 916–937 (AKSDSGEGGEDPARFRPDKNGD) is disordered. A compositionally biased stretch (basic and acidic residues) spans 926–936 (DPARFRPDKNG). FMN contacts are provided by residues 1085–1142 (LSEV…IMVR) and 1086–1142 (SEVH…IMVR). [3Fe-4S] cluster is bound by residues Cys1138, Cys1144, and Cys1149.

The protein belongs to the glutamate synthase family. As to quaternary structure, aggregate of 4 catalytic active heterodimers, consisting of a large and a small subunit. It depends on [3Fe-4S] cluster as a cofactor. Requires FAD as cofactor. The cofactor is FMN.

The catalysed reaction is 2 L-glutamate + NADP(+) = L-glutamine + 2-oxoglutarate + NADPH + H(+). Its pathway is amino-acid biosynthesis; L-glutamate biosynthesis via GLT pathway; L-glutamate from 2-oxoglutarate and L-glutamine (NADP(+) route): step 1/1. It functions in the pathway energy metabolism; nitrogen metabolism. The protein is Glutamate synthase [NADPH] large chain (gltB) of Azospirillum brasilense.